The primary structure comprises 422 residues: Tyrosine--tRNA ligase (422 aa).

Residue Y37 participates in L-tyrosine binding. The 'HIGH' region signature appears at 42–51 (PTEESLHIGH). 2 residues coordinate L-tyrosine: Y175 and Q179. Residues 235–239 (KFGKT) carry the 'KMSKS' region motif. K238 provides a ligand contact to ATP. Residues 357–414 (KDLQEALVLTSLAQSRTQAKNMIISNSISINTEKIRKNHIFHEKDKLFGKFTLLSRGK) form the S4 RNA-binding domain.

It belongs to the class-I aminoacyl-tRNA synthetase family. TyrS type 1 subfamily. As to quaternary structure, homodimer.

Its subcellular location is the cytoplasm. It catalyses the reaction tRNA(Tyr) + L-tyrosine + ATP = L-tyrosyl-tRNA(Tyr) + AMP + diphosphate + H(+). Functionally, catalyzes the attachment of tyrosine to tRNA(Tyr) in a two-step reaction: tyrosine is first activated by ATP to form Tyr-AMP and then transferred to the acceptor end of tRNA(Tyr). The polypeptide is Tyrosine--tRNA ligase (Buchnera aphidicola subsp. Acyrthosiphon pisum (strain Tuc7)).